The chain runs to 347 residues: Serpentine receptor class beta-2 (347 aa).

7 helical membrane-spanning segments follow: residues 27-47 (IAQLWTFVVSILAIPALYIFL), 62-82 (FLLVCYFSASFVFAVLLAFLF), 108-128 (GNLSLTLFMTIQMIMPLGFSI), 146-166 (FLGPLLVFTLIGIDLALLYHV), 194-214 (FWELLYAEIGNFICNCIFLLV), 246-266 (LIVSFTHLLFVGWYLIATIFV), and 288-308 (ITVPTYNLTIVFVGIKALSFM).

The protein belongs to the nematode receptor-like protein srb family.

The protein resides in the membrane. The sequence is that of Serpentine receptor class beta-2 (srb-2) from Caenorhabditis elegans.